The primary structure comprises 506 residues: Ribose import ATP-binding protein RbsA 2 (506 aa).

2 consecutive ABC transporter domains span residues 7 to 242 and 250 to 497; these read LEMR…VGRP and ERDI…TGVN. Position 39–46 (39–46) interacts with ATP; sequence GENGAGKS.

The protein belongs to the ABC transporter superfamily. Ribose importer (TC 3.A.1.2.1) family. In terms of assembly, the complex is composed of an ATP-binding protein (RbsA), two transmembrane proteins (RbsC) and a solute-binding protein (RbsB).

It is found in the cell inner membrane. The catalysed reaction is D-ribose(out) + ATP + H2O = D-ribose(in) + ADP + phosphate + H(+). Functionally, part of the ABC transporter complex RbsABC involved in ribose import. Responsible for energy coupling to the transport system. In Escherichia coli O157:H7, this protein is Ribose import ATP-binding protein RbsA 2.